The primary structure comprises 298 residues: tRNA pseudouridine synthase B (298 aa).

Residue D44 is the Nucleophile of the active site.

This sequence belongs to the pseudouridine synthase TruB family. Type 1 subfamily.

It carries out the reaction uridine(55) in tRNA = pseudouridine(55) in tRNA. In terms of biological role, responsible for synthesis of pseudouridine from uracil-55 in the psi GC loop of transfer RNAs. The polypeptide is tRNA pseudouridine synthase B (Mycobacteroides abscessus (strain ATCC 19977 / DSM 44196 / CCUG 20993 / CIP 104536 / JCM 13569 / NCTC 13031 / TMC 1543 / L948) (Mycobacterium abscessus)).